We begin with the raw amino-acid sequence, 137 residues long: Small ribosomal subunit protein bS6 (137 aa).

The segment at 96–137 (VTEQSIMLKQKEERAERAPRRDDREERAPRREEEAKPEAAAE) is disordered. Residues 104–137 (KQKEERAERAPRRDDREERAPRREEEAKPEAAAE) show a composition bias toward basic and acidic residues.

This sequence belongs to the bacterial ribosomal protein bS6 family.

Its function is as follows. Binds together with bS18 to 16S ribosomal RNA. This is Small ribosomal subunit protein bS6 from Vibrio atlanticus (strain LGP32) (Vibrio splendidus (strain Mel32)).